The chain runs to 147 residues: Ubiquitin-conjugating enzyme E2 D2 (147 aa).

The UBC core domain occupies 1–147 (MALKRIHKEL…SREWTQKYAM (147 aa)). C85 acts as the Glycyl thioester intermediate in catalysis.

It belongs to the ubiquitin-conjugating enzyme family. Interacts with SCF (SKP1-CUL1-F-box protein) E3 ubiquitin ligase complex. Interacts with CNOT4 (via RING domain). Interacts with E3 ubiquitin-protein ligases CBLC, PJA1 and PJA2. Interacts with PDZRN3. Interacts with PPP1R11. Interacts with E3 ubiquitin-protein ligase PHF7; the interaction inhibits cleavage of PHF7 and promotes association of the complex with the nucleosome core particle.

The catalysed reaction is S-ubiquitinyl-[E1 ubiquitin-activating enzyme]-L-cysteine + [E2 ubiquitin-conjugating enzyme]-L-cysteine = [E1 ubiquitin-activating enzyme]-L-cysteine + S-ubiquitinyl-[E2 ubiquitin-conjugating enzyme]-L-cysteine.. The enzyme catalyses S-ubiquitinyl-[E1 ubiquitin-activating enzyme]-L-cysteine + [acceptor protein]-L-lysine = [E1 ubiquitin-activating enzyme]-L-cysteine + N(6)-monoubiquitinyl-[acceptor protein]-L-lysine.. The protein operates within protein modification; protein ubiquitination. In terms of biological role, accepts ubiquitin from the E1 complex and catalyzes its covalent attachment to other proteins. In vitro catalyzes 'Lys-48'-linked polyubiquitination. Mediates the selective degradation of short-lived and abnormal proteins. Functions in the E6/E6-AP-induced ubiquitination of p53/TP53. Mediates ubiquitination of PEX5 and SQSTM1 and autoubiquitination of STUB1 and TRAF6. Involved in the signal-induced conjugation and subsequent degradation of NFKBIA, FBXW2-mediated GCM1 ubiquitination and degradation, MDM2-dependent degradation of p53/TP53 and the activation of MAVS in the mitochondria by RIGI in response to viral infection. Essential for viral activation of IRF3. The chain is Ubiquitin-conjugating enzyme E2 D2 (UBE2D2) from Sus scrofa (Pig).